A 1044-amino-acid chain; its full sequence is Phosphatidylinositol 4,5-bisphosphate 3-kinase catalytic subunit delta isoform (1044 aa).

Residues glutamate 16–glutamate 105 form the PI3K-ABD domain. A PI3K-RBD domain is found at asparagine 187–histidine 278. The interval aspartate 287–serine 312 is disordered. The region spanning leucine 319 to proline 476 is the C2 PI3K-type domain. The PIK helical domain maps to histidine 497–glycine 674. Phosphotyrosine is present on tyrosine 524. One can recognise a PI3K/PI4K catalytic domain in the interval cysteine 745 to tryptophan 1027. Residues phenylalanine 751–lysine 757 are G-loop. Residues glycine 890 to asparagine 898 are catalytic loop. The tract at residues histidine 909–threonine 935 is activation loop. At serine 1039 the chain carries Phosphoserine; by autocatalysis.

Belongs to the PI3/PI4-kinase family. Heterodimer of a catalytic subunit PIK3CD and a p85 regulatory subunit (PIK3R1, PIK3R2 or PIK3R3). Interacts with ERAS. Interacts with HRAS. Autophosphorylation on Ser-1039 results in the almost complete inactivation of the lipid kinase activity. As to expression, in humans, the highest levels of expression are seen in peripheral blood mononuclear cells, spleen, and thymus, and low levels of expression in testes, uterus, colon, and small intestine but not in other tissues examined including prostate, heart, brain, and liver. Isoform 2 is expressed in normal thymus, lung and spleen tissues, and is detected at low levels in normal lysates from colon and ovarian biopsies, at elevated levels in lysates from colorectal tumors and is abundantly expressed in some ovarian tumors (at protein level). Both isoform 1 and isoform 2 are widely expressed. Isoform 1 is expressed predominantly in leukocytes.

It localises to the cytoplasm. It catalyses the reaction a 1,2-diacyl-sn-glycero-3-phospho-(1D-myo-inositol-4,5-bisphosphate) + ATP = a 1,2-diacyl-sn-glycero-3-phospho-(1D-myo-inositol-3,4,5-trisphosphate) + ADP + H(+). The enzyme catalyses a 1,2-diacyl-sn-glycero-3-phospho-(1D-myo-inositol) + ATP = a 1,2-diacyl-sn-glycero-3-phospho-(1D-myo-inositol-3-phosphate) + ADP + H(+). It carries out the reaction 1-octadecanoyl-2-(5Z,8Z,11Z,14Z)-eicosatetraenoyl-sn-glycero-3-phospho-1D-myo-inositol 4,5-bisphosphate + ATP = 1-octadecanoyl-2-(5Z,8Z,11Z,14Z-eicosatetraenoyl)-sn-glycero-3-phospho-(1D-myo-inositol 3,4,5-triphosphate) + ADP + H(+). It functions in the pathway phospholipid metabolism; phosphatidylinositol phosphate biosynthesis. With respect to regulation, activated by growth factors and cytokine receptors through a tyrosine-kinase-dependent mechanism. Activated by RAS. IC87114 inhibits lipid kinase activity and is selective in cells at doses up to 5-10 uM. IC87114 blocks T-cell receptor signaling in naive and memory T-cells and reduces cytokine production by memory T-cells. Phosphoinositide-3-kinase (PI3K) phosphorylates phosphatidylinositol (PI) and its phosphorylated derivatives at position 3 of the inositol ring to produce 3-phosphoinositides. Uses ATP and PtdIns(4,5)P2 (phosphatidylinositol 4,5-bisphosphate) to generate phosphatidylinositol 3,4,5-trisphosphate (PIP3). PIP3 plays a key role by recruiting PH domain-containing proteins to the membrane, including AKT1 and PDPK1, activating signaling cascades involved in cell growth, survival, proliferation, motility and morphology. Mediates immune responses. Plays a role in B-cell development, proliferation, migration, and function. Required for B-cell receptor (BCR) signaling. Mediates B-cell proliferation response to anti-IgM, anti-CD40 and IL4 stimulation. Promotes cytokine production in response to TLR4 and TLR9. Required for antibody class switch mediated by TLR9. Involved in the antigen presentation function of B-cells. Involved in B-cell chemotaxis in response to CXCL13 and sphingosine 1-phosphate (S1P). Required for proliferation, signaling and cytokine production of naive, effector and memory T-cells. Required for T-cell receptor (TCR) signaling. Mediates TCR signaling events at the immune synapse. Activation by TCR leads to antigen-dependent memory T-cell migration and retention to antigenic tissues. Together with PIK3CG participates in T-cell development. Contributes to T-helper cell expansion and differentiation. Required for T-cell migration mediated by homing receptors SELL/CD62L, CCR7 and S1PR1 and antigen dependent recruitment of T-cells. Together with PIK3CG is involved in natural killer (NK) cell development and migration towards the sites of inflammation. Participates in NK cell receptor activation. Plays a role in NK cell maturation and cytokine production. Together with PIK3CG is involved in neutrophil chemotaxis and extravasation. Together with PIK3CG participates in neutrophil respiratory burst. Plays important roles in mast-cell development and mast cell mediated allergic response. Involved in stem cell factor (SCF)-mediated proliferation, adhesion and migration. Required for allergen-IgE-induced degranulation and cytokine release. The lipid kinase activity is required for its biological function. Isoform 2 may be involved in stabilizing total RAS levels, resulting in increased ERK phosphorylation and increased PI3K activity. This chain is Phosphatidylinositol 4,5-bisphosphate 3-kinase catalytic subunit delta isoform (PIK3CD), found in Homo sapiens (Human).